Consider the following 509-residue polypeptide: tRNA-2-methylthio-N(6)-dimethylallyladenosine synthase (509 aa).

Residues 1–15 (MNEQQRLASQQVNSS) show a composition bias toward polar residues. Residues 1–26 (MNEQQRLASQQVNSSTKKEEKDYSKY) form a disordered region. Residues 16-25 (TKKEEKDYSK) are compositionally biased toward basic and acidic residues. The MTTase N-terminal domain occupies 66 to 184 (RKFYIRTYGC…LPYILKDAMF (119 aa)). [4Fe-4S] cluster contacts are provided by C75, C111, C145, C221, C225, and C228. The region spanning 207 to 437 (RRGDIKAWVN…NALVNKLAIE (231 aa)) is the Radical SAM core domain. One can recognise a TRAM domain in the interval 440–503 (NRYKGQIVEV…TWSLNGELVE (64 aa)).

It belongs to the methylthiotransferase family. MiaB subfamily. As to quaternary structure, monomer. [4Fe-4S] cluster serves as cofactor.

It localises to the cytoplasm. It carries out the reaction N(6)-dimethylallyladenosine(37) in tRNA + (sulfur carrier)-SH + AH2 + 2 S-adenosyl-L-methionine = 2-methylsulfanyl-N(6)-dimethylallyladenosine(37) in tRNA + (sulfur carrier)-H + 5'-deoxyadenosine + L-methionine + A + S-adenosyl-L-homocysteine + 2 H(+). In terms of biological role, catalyzes the methylthiolation of N6-(dimethylallyl)adenosine (i(6)A), leading to the formation of 2-methylthio-N6-(dimethylallyl)adenosine (ms(2)i(6)A) at position 37 in tRNAs that read codons beginning with uridine. This Bacillus cereus (strain AH187) protein is tRNA-2-methylthio-N(6)-dimethylallyladenosine synthase.